We begin with the raw amino-acid sequence, 330 residues long: ADP-L-glycero-D-manno-heptose-6-epimerase (330 aa).

Residues 11–12 (FI), 32–33 (DN), lysine 39, lysine 54, 75–79 (EGACS), and asparagine 92 each bind NADP(+). Tyrosine 139 (proton acceptor) is an active-site residue. Residue lysine 143 participates in NADP(+) binding. Substrate is bound at residue asparagine 168. The NADP(+) site is built by valine 169 and lysine 177. Catalysis depends on lysine 177, which acts as the Proton acceptor. Residues arginine 179, histidine 186, 200-203 (FGEY), arginine 213, and tyrosine 292 each bind substrate.

The protein belongs to the NAD(P)-dependent epimerase/dehydratase family. HldD subfamily. Homopentamer. NADP(+) is required as a cofactor.

The catalysed reaction is ADP-D-glycero-beta-D-manno-heptose = ADP-L-glycero-beta-D-manno-heptose. It functions in the pathway nucleotide-sugar biosynthesis; ADP-L-glycero-beta-D-manno-heptose biosynthesis; ADP-L-glycero-beta-D-manno-heptose from D-glycero-beta-D-manno-heptose 7-phosphate: step 4/4. In terms of biological role, catalyzes the interconversion between ADP-D-glycero-beta-D-manno-heptose and ADP-L-glycero-beta-D-manno-heptose via an epimerization at carbon 6 of the heptose. This Burkholderia mallei (strain NCTC 10247) protein is ADP-L-glycero-D-manno-heptose-6-epimerase.